The chain runs to 306 residues: Oxygen-dependent coproporphyrinogen-III oxidase (306 aa).

Ser94 serves as a coordination point for substrate. Positions 98 and 108 each coordinate a divalent metal cation. His108 functions as the Proton donor in the catalytic mechanism. A substrate-binding site is contributed by 110–112 (NVR). His147 and His177 together coordinate a divalent metal cation. Positions 242–277 (YVEFNLVYDRGTLFGLQTGGRTESILMSMPPLVRWE) are important for dimerization. 260 to 262 (GGR) is a binding site for substrate.

This sequence belongs to the aerobic coproporphyrinogen-III oxidase family. Homodimer. Requires a divalent metal cation as cofactor.

It localises to the cytoplasm. The catalysed reaction is coproporphyrinogen III + O2 + 2 H(+) = protoporphyrinogen IX + 2 CO2 + 2 H2O. The protein operates within porphyrin-containing compound metabolism; protoporphyrin-IX biosynthesis; protoporphyrinogen-IX from coproporphyrinogen-III (O2 route): step 1/1. Its function is as follows. Involved in the heme biosynthesis. Catalyzes the aerobic oxidative decarboxylation of propionate groups of rings A and B of coproporphyrinogen-III to yield the vinyl groups in protoporphyrinogen-IX. The chain is Oxygen-dependent coproporphyrinogen-III oxidase from Shewanella woodyi (strain ATCC 51908 / MS32).